The primary structure comprises 394 residues: Bone morphogenetic protein 2 (394 aa).

The signal sequence occupies residues 1–19; the sequence is MVAGTRCLLVLLLPQVLLG. Residues 20–280 constitute a propeptide, cleaved by PCSK5; it reads GAAGLIPELG…GHPLHKREKR (261 aa). Ser-86 is modified (phosphoserine). N-linked (GlcNAc...) asparagine glycosylation is found at Asn-134, Asn-162, and Asn-198. Positions 269 to 291 are disordered; the sequence is GKGHPLHKREKRQAKHKQRKRLK. Basic residues predominate over residues 272 to 291; sequence HPLHKREKRQAKHKQRKRLK. 3 disulfides stabilise this stretch: Cys-294–Cys-359, Cys-323–Cys-391, and Cys-327–Cys-393. Residue Asn-336 is glycosylated (N-linked (GlcNAc...) asparagine).

This sequence belongs to the TGF-beta family. In terms of assembly, homodimer; disulfide-linked. Interacts with SOSTDC1. Interacts with GREM2, RGMA, RGMB and RGMC. Interacts with ASPN. Interacts with MAFP5. Interacts with FBN1 (via N-terminal domain) and FBN2. Interacts with type I receptor BMPR1A. Interacts with type II receptor BMPR2. Interacts with SCUBE3. Interacts with TNFAIP6 (primarily via Link domain); this interaction is inhibited by hyaluronan. Interacts with ERFE. Interacts with BMPR1A/ALK3; the interaction may induce HAMP expression. Forms heterodimers with BMP6 in vitro; the heterodimer then binds to its receptor BMPR1A /ALK3 and may induce HAMP expression. Interacts with TGFBR3.

Its subcellular location is the secreted. Functionally, growth factor of the TGF-beta superfamily that plays essential roles in many developmental processes, including cardiogenesis, neurogenesis, and osteogenesis. Induces cartilage and bone formation. Initiates the canonical BMP signaling cascade by associating with type I receptor BMPR1A and type II receptor BMPR2. Once all three components are bound together in a complex at the cell surface, BMPR2 phosphorylates and activates BMPR1A. In turn, BMPR1A propagates signal by phosphorylating SMAD1/5/8 that travel to the nucleus and act as activators and repressors of transcription of target genes. Also acts to promote expression of HAMP, via the interaction with its receptor BMPR1A/ALK3. Can also signal through non-canonical pathways such as ERK/MAP kinase signaling cascade that regulates osteoblast differentiation. Also stimulates the differentiation of myoblasts into osteoblasts via the EIF2AK3-EIF2A-ATF4 pathway by stimulating EIF2A phosphorylation which leads to increased expression of ATF4 which plays a central role in osteoblast differentiation. Acts as a positive regulator of odontoblast differentiation during mesenchymal tooth germ formation, expression is repressed during the bell stage by MSX1-mediated inhibition of CTNNB1 signaling. The chain is Bone morphogenetic protein 2 (Bmp2) from Mus musculus (Mouse).